Here is a 1357-residue protein sequence, read N- to C-terminus: DNA-directed RNA polymerase subunit beta (1357 aa).

The protein belongs to the RNA polymerase beta chain family. The RNAP catalytic core consists of 2 alpha, 1 beta, 1 beta' and 1 omega subunit. When a sigma factor is associated with the core the holoenzyme is formed, which can initiate transcription.

It carries out the reaction RNA(n) + a ribonucleoside 5'-triphosphate = RNA(n+1) + diphosphate. Functionally, DNA-dependent RNA polymerase catalyzes the transcription of DNA into RNA using the four ribonucleoside triphosphates as substrates. In Pseudomonas putida (strain W619), this protein is DNA-directed RNA polymerase subunit beta.